We begin with the raw amino-acid sequence, 204 residues long: LexA repressor (204 aa).

A DNA-binding region (H-T-H motif) is located at residues Val29–Ser49. Residues Ser126 and Lys163 each act as for autocatalytic cleavage activity in the active site.

This sequence belongs to the peptidase S24 family. As to quaternary structure, homodimer.

It catalyses the reaction Hydrolysis of Ala-|-Gly bond in repressor LexA.. Functionally, represses a number of genes involved in the response to DNA damage (SOS response), including recA and lexA. In the presence of single-stranded DNA, RecA interacts with LexA causing an autocatalytic cleavage which disrupts the DNA-binding part of LexA, leading to derepression of the SOS regulon and eventually DNA repair. This is LexA repressor from Clostridium novyi (strain NT).